A 420-amino-acid chain; its full sequence is uncharacterized protein (420 aa).

This sequence belongs to the Rv1128c/1148c/1588c/1702c/1945/3466 family.

This is an uncharacterized protein from Mycobacterium tuberculosis (strain CDC 1551 / Oshkosh).